We begin with the raw amino-acid sequence, 573 residues long: ESX-1 secretion system protein EccA1 (573 aa).

Residue 334-341 (GPPGTGKT) coordinates ATP.

The protein belongs to the CbxX/CfxQ family. In terms of assembly, part of the ESX-1 / type VII secretion system (T7SS), which is composed of cytosolic and membrane components.

The protein localises to the cytoplasm. Functionally, part of the ESX-1 specialized secretion system, which delivers several virulence factors to host cells during infection, including the key virulence factors EsxA (ESAT-6) and EsxB (CFP-10). EccA1 exhibits ATPase activity and may provide energy for the export of ESX-1 substrates. The chain is ESX-1 secretion system protein EccA1 from Mycobacterium tuberculosis (strain CDC 1551 / Oshkosh).